A 39-amino-acid polypeptide reads, in one-letter code: Cytochrome b6-f complex subunit 5 (39 aa).

A helical membrane pass occupies residues L5–A25.

It belongs to the PetG family. In terms of assembly, the 4 large subunits of the cytochrome b6-f complex are cytochrome b6, subunit IV (17 kDa polypeptide, PetD), cytochrome f and the Rieske protein, while the 4 small subunits are PetG, PetL, PetM and PetN. The complex functions as a dimer.

The protein resides in the cellular thylakoid membrane. Component of the cytochrome b6-f complex, which mediates electron transfer between photosystem II (PSII) and photosystem I (PSI), cyclic electron flow around PSI, and state transitions. PetG is required for either the stability or assembly of the cytochrome b6-f complex. The protein is Cytochrome b6-f complex subunit 5 of Prochlorococcus marinus subsp. pastoris (strain CCMP1986 / NIES-2087 / MED4).